A 1468-amino-acid polypeptide reads, in one-letter code: DNA polymerase alpha catalytic subunit A (1468 aa).

The segment covering Met1–Arg12 has biased composition (basic and acidic residues). 3 disordered regions span residues Met1 to Asp34, Gly71 to Ile135, and Asn166 to Ser205. Position 2 is an N-acetylserine (Ser2). The residue at position 31 (Ser31) is a Phosphoserine. Positions Gly71 to Asp80 are enriched in basic and acidic residues. Phosphoserine occurs at positions 82, 83, 84, 169, and 170. Positions Asn166–Lys176 are enriched in polar residues. Residue Thr172 is modified to Phosphothreonine. Residues Asn183–Ser205 are compositionally biased toward basic and acidic residues. Phosphoserine is present on residues Ser240 and Ser274. The interval Leu256–Asp275 is disordered. Positions Ala266–Asp275 are enriched in acidic residues. Phosphothreonine is present on residues Thr309 and Thr313. The disordered stretch occupies residues Pro813–Asn837. A DNA-binding region spans residues Lys1246–Ser1381. Zn(2+) contacts are provided by Cys1287, Cys1290, Cys1314, Cys1317, Cys1348, Cys1353, Cys1367, and Cys1372. A CysA-type zinc finger spans residues Cys1287–Cys1317. A CysB motif motif is present at residues Cys1348–Cys1372.

It belongs to the DNA polymerase type-B family. DNA polymerase alpha:primase is a four subunit enzyme complex, which is assembled throughout the cell cycle, and consists of the two DNA polymerase subunits A POL1 and B POL12, and the DNA primase large PRI2 and small PRI1 subunits. Subunit B POL12 binds to subunit A POL1. POL1 interacts with CDC13, POB3, SPT16 and MCM10.

The protein resides in the nucleus. The enzyme catalyses DNA(n) + a 2'-deoxyribonucleoside 5'-triphosphate = DNA(n+1) + diphosphate. In terms of biological role, catalytic component of DNA polymerase alpha, which in complex with DNA primase (DNA polymerase alpha:primase) constitutes a replicative polymerase. POL1 has a role in promoting telomere replication during interaction with CDC13. The protein is DNA polymerase alpha catalytic subunit A (POL1) of Saccharomyces cerevisiae (strain ATCC 204508 / S288c) (Baker's yeast).